Reading from the N-terminus, the 200-residue chain is Large ribosomal subunit protein uL4 (200 aa).

The disordered stretch occupies residues arginine 43–aspartate 71.

This sequence belongs to the universal ribosomal protein uL4 family. Part of the 50S ribosomal subunit.

Its function is as follows. One of the primary rRNA binding proteins, this protein initially binds near the 5'-end of the 23S rRNA. It is important during the early stages of 50S assembly. It makes multiple contacts with different domains of the 23S rRNA in the assembled 50S subunit and ribosome. Forms part of the polypeptide exit tunnel. The chain is Large ribosomal subunit protein uL4 from Aggregatibacter actinomycetemcomitans (Actinobacillus actinomycetemcomitans).